Here is a 235-residue protein sequence, read N- to C-terminus: Probable transcriptional regulatory protein MPN_478 (235 aa).

Belongs to the TACO1 family.

Its subcellular location is the cytoplasm. The sequence is that of Probable transcriptional regulatory protein MPN_478 from Mycoplasma pneumoniae (strain ATCC 29342 / M129 / Subtype 1) (Mycoplasmoides pneumoniae).